Here is a 263-residue protein sequence, read N- to C-terminus: Follistatin-related protein 3 (263 aa).

A signal peptide spans methionine 1–serine 26. Positions glycine 36–glycine 107 constitute a TB domain. 13 disulfides stabilise this stretch: cysteine 38–cysteine 61, cysteine 48–cysteine 92, cysteine 62–cysteine 95, cysteine 99–cysteine 110, cysteine 104–cysteine 119, cysteine 121–cysteine 153, cysteine 125–cysteine 146, cysteine 135–cysteine 167, cysteine 171–cysteine 182, cysteine 176–cysteine 192, cysteine 195–cysteine 229, cysteine 200–cysteine 222, and cysteine 211–cysteine 243. An N-linked (GlcNAc...) asparagine glycan is attached at asparagine 73. A Follistatin-like 1 domain is found at cysteine 99 to cysteine 119. The 57-residue stretch at leucine 113–lysine 169 folds into the Kazal-like 1 domain. One can recognise a Follistatin-like 2 domain in the interval serine 170 to valine 193. The 57-residue stretch at serine 189–glycine 245 folds into the Kazal-like 2 domain. The N-linked (GlcNAc...) asparagine glycan is linked to asparagine 215. The disordered stretch occupies residues serine 242–valine 263. Serine 255 is subject to Phosphoserine; by FAM20C.

Interacts with INHBA and INHBB. Interacts with FN1. Interacts with ADAM12. Isoform 2 interacts with MLLT10; the interaction enhances MLLT10 in vitro transcriptional activity and self-association. Interacts with MSTN. In terms of tissue distribution, expressed in a wide range of tissues.

The protein localises to the secreted. The protein resides in the nucleus. In terms of biological role, isoform 1 or the secreted form is a binding and antagonizing protein for members of the TGF-beta family, such as activin, BMP2 and MSTN. Inhibits activin A-, activin B-, BMP2- and MSDT-induced cellular signaling; more effective on activin A than on activin B. Involved in bone formation; inhibits osteoclast differentiation. Involved in hematopoiesis; involved in differentiation of hemopoietic progenitor cells, increases hematopoietic cell adhesion to fibronectin and seems to contribute to the adhesion of hematopoietic precursor cells to the bone marrow stroma. Isoform 2 or the nuclear form is probably involved in transcriptional regulation via interaction with MLLT10. The chain is Follistatin-related protein 3 (FSTL3) from Homo sapiens (Human).